A 275-amino-acid chain; its full sequence is Thiazole synthase (275 aa).

The active-site Schiff-base intermediate with DXP is the lysine 116. 1-deoxy-D-xylulose 5-phosphate is bound by residues glycine 177, 203–204 (AG), and 225–226 (NT).

The protein belongs to the ThiG family. Homotetramer. Forms heterodimers with either ThiH or ThiS.

It is found in the cytoplasm. It carries out the reaction [ThiS sulfur-carrier protein]-C-terminal-Gly-aminoethanethioate + 2-iminoacetate + 1-deoxy-D-xylulose 5-phosphate = [ThiS sulfur-carrier protein]-C-terminal Gly-Gly + 2-[(2R,5Z)-2-carboxy-4-methylthiazol-5(2H)-ylidene]ethyl phosphate + 2 H2O + H(+). It functions in the pathway cofactor biosynthesis; thiamine diphosphate biosynthesis. In terms of biological role, catalyzes the rearrangement of 1-deoxy-D-xylulose 5-phosphate (DXP) to produce the thiazole phosphate moiety of thiamine. Sulfur is provided by the thiocarboxylate moiety of the carrier protein ThiS. In vitro, sulfur can be provided by H(2)S. The sequence is that of Thiazole synthase from Acaryochloris marina (strain MBIC 11017).